The primary structure comprises 245 residues: 1-(5-phosphoribosyl)-5-[(5-phosphoribosylamino)methylideneamino] imidazole-4-carboxamide isomerase (245 aa).

The active-site Proton acceptor is aspartate 7. Aspartate 129 (proton donor) is an active-site residue.

This sequence belongs to the HisA/HisF family.

Its subcellular location is the cytoplasm. The enzyme catalyses 1-(5-phospho-beta-D-ribosyl)-5-[(5-phospho-beta-D-ribosylamino)methylideneamino]imidazole-4-carboxamide = 5-[(5-phospho-1-deoxy-D-ribulos-1-ylimino)methylamino]-1-(5-phospho-beta-D-ribosyl)imidazole-4-carboxamide. It participates in amino-acid biosynthesis; L-histidine biosynthesis; L-histidine from 5-phospho-alpha-D-ribose 1-diphosphate: step 4/9. The protein is 1-(5-phosphoribosyl)-5-[(5-phosphoribosylamino)methylideneamino] imidazole-4-carboxamide isomerase of Shewanella putrefaciens (strain CN-32 / ATCC BAA-453).